The following is a 275-amino-acid chain: MRIGIISRTDKEEAIELDDTIIKYLFENNIEVELDSQLTKKLPQYSENSVDITKMNADIVLCVGGDGTVLHAQRYLSPKKIPILSINMGTVGFLTEVDPEDIFECLDKLLSYDFFIEERLQLDVLIDSQWHTVLNELVLMTSQPAKMLDLRVSVDEEIVDEVRADGLIISTPSGSTAYAMSAGGPIVDPRVDAAIIIPICPFKLNTRPKIVPADSIITVKFLKEGKKGVAVLDGIVNKEFDYLGEIKLKKSENSAYFVRFKKNFYNSVNNKLIVG.

Residue D66 is the Proton acceptor of the active site. NAD(+)-binding positions include 66–67 (DG), H71, 135–136 (NE), K146, R163, D165, and 176–181 (TAYAMS).

The protein belongs to the NAD kinase family. The cofactor is a divalent metal cation.

It localises to the cytoplasm. The catalysed reaction is NAD(+) + ATP = ADP + NADP(+) + H(+). In terms of biological role, involved in the regulation of the intracellular balance of NAD and NADP, and is a key enzyme in the biosynthesis of NADP. Catalyzes specifically the phosphorylation on 2'-hydroxyl of the adenosine moiety of NAD to yield NADP. In Methanosphaera stadtmanae (strain ATCC 43021 / DSM 3091 / JCM 11832 / MCB-3), this protein is NAD kinase.